The chain runs to 300 residues: Geranylgeranyl pyrophosphate synthase (300 aa).

At methionine 1 the chain carries N-acetylmethionine. Isopentenyl diphosphate is bound by residues lysine 25, arginine 28, and histidine 57. Residues aspartate 64 and aspartate 68 each contribute to the Mg(2+) site. Position 73 (arginine 73) interacts with dimethylallyl diphosphate. An isopentenyl diphosphate-binding site is contributed by arginine 74. Dimethylallyl diphosphate-binding residues include lysine 151, threonine 152, glutamine 185, lysine 202, and lysine 212.

It belongs to the FPP/GGPP synthase family. In terms of assembly, homohexamer; trimer of homodimers. Mg(2+) serves as cofactor.

Its subcellular location is the cytoplasm. The protein localises to the perinuclear region. The protein resides in the myofibril. It localises to the sarcomere. It is found in the z line. The catalysed reaction is isopentenyl diphosphate + dimethylallyl diphosphate = (2E)-geranyl diphosphate + diphosphate. The enzyme catalyses isopentenyl diphosphate + (2E)-geranyl diphosphate = (2E,6E)-farnesyl diphosphate + diphosphate. It carries out the reaction isopentenyl diphosphate + (2E,6E)-farnesyl diphosphate = (2E,6E,10E)-geranylgeranyl diphosphate + diphosphate. The protein operates within isoprenoid biosynthesis; farnesyl diphosphate biosynthesis; farnesyl diphosphate from geranyl diphosphate and isopentenyl diphosphate: step 1/1. It functions in the pathway isoprenoid biosynthesis; geranyl diphosphate biosynthesis; geranyl diphosphate from dimethylallyl diphosphate and isopentenyl diphosphate: step 1/1. It participates in isoprenoid biosynthesis; geranylgeranyl diphosphate biosynthesis; geranylgeranyl diphosphate from farnesyl diphosphate and isopentenyl diphosphate: step 1/1. Functionally, catalyzes the trans-addition of the three molecules of isopentenyl diphosphate (IPP) onto dimethylallyl pyrophosphate (DMAPP) to form geranylgeranyl pyrophosphate, an important precursor of carotenoids and geranylated proteins. This is Geranylgeranyl pyrophosphate synthase from Mus musculus (Mouse).